We begin with the raw amino-acid sequence, 961 residues long: Replication protein 1a (961 aa).

Positions 48–380 (VRNKLSIEEA…VIINGQAIMA (333 aa)) are methyltransferase. The region spanning 71 to 260 (NLTQQYHAPH…HGWQDLGSFF (190 aa)) is the Alphavirus-like MT domain. The interval 392–409 (VAFALTLNLYQKYEKLTA) is membrane association. The span at 503 to 512 (KTKRSKKKAK) shows a compositional bias: basic residues. Residues 503–541 (KTKRSKKKAKVPPAAEIPQEEFHDAPESSSPESVSDDVK) form a disordered region. One can recognise a (+)RNA virus helicase ATP-binding domain in the interval 655 to 810 (DKTCACSNLR…NLQYDRRDVV (156 aa)). Positions 682-946 (MVDGVAGCGK…TRHKKSFEYC (265 aa)) are ATP-dependent helicase. Position 685 to 692 (685 to 692 (GVAGCGKT)) interacts with ATP. A (+)RNA virus helicase C-terminal domain is found at 811–961 (HKTYRCPQDV…AGDLIFNCVK (151 aa)).

This sequence belongs to the bromoviridae replication protein 1a family. As to quaternary structure, interacts with RNA-directed RNA polymerase 2a.

It is found in the host endoplasmic reticulum membrane. In terms of biological role, involved in the virus replication. Contains a helicase domain and a methyltransferase domain. The methyltransferase domain is probably involved in viral RNA capping. Involved in the formation of ER membrane spherular invaginations in which RNA replication complexes form. The chain is Replication protein 1a from Bromus inermis (Smooth brome grass).